Reading from the N-terminus, the 195-residue chain is Protein GrpE (195 aa).

A compositionally biased stretch (basic and acidic residues) spans M1 to D18. The disordered stretch occupies residues M1 to A41.

The protein belongs to the GrpE family. In terms of assembly, homodimer.

The protein resides in the cytoplasm. In terms of biological role, participates actively in the response to hyperosmotic and heat shock by preventing the aggregation of stress-denatured proteins, in association with DnaK and GrpE. It is the nucleotide exchange factor for DnaK and may function as a thermosensor. Unfolded proteins bind initially to DnaJ; upon interaction with the DnaJ-bound protein, DnaK hydrolyzes its bound ATP, resulting in the formation of a stable complex. GrpE releases ADP from DnaK; ATP binding to DnaK triggers the release of the substrate protein, thus completing the reaction cycle. Several rounds of ATP-dependent interactions between DnaJ, DnaK and GrpE are required for fully efficient folding. The polypeptide is Protein GrpE (Bacteroides fragilis (strain ATCC 25285 / DSM 2151 / CCUG 4856 / JCM 11019 / LMG 10263 / NCTC 9343 / Onslow / VPI 2553 / EN-2)).